The chain runs to 207 residues: Serotonin N-acetyltransferase (207 aa).

Residues 1–28 are disordered; the sequence is MSTQSTHPLKPEAPRLPPGIPESPSCQR. Position 31 is a phosphothreonine; by PKA (T31). One can recognise an N-acetyltransferase domain in the interval 35–194; the sequence is SEFRCLTPED…SLTFMELHCS (160 aa). L124 lines the substrate pocket. Acetyl-CoA is bound by residues 124-126 and 132-137; these read LAV and QQGRGP. M159 contributes to the substrate binding site. Residue 168–170 participates in acetyl-CoA binding; it reads YER. Phosphoserine is present on S205.

Belongs to the acetyltransferase family. AANAT subfamily. In terms of assembly, monomer. Interacts with several 14-3-3 proteins, including YWHAB, YWHAE, YWHAG and YWHAZ, preferentially when phosphorylated at Thr-31. Phosphorylation on Ser-205 also allows binding to YWHAZ, but with lower affinity. The interaction with YWHAZ considerably increases affinity for arylalkylamines and acetyl-CoA and protects the enzyme from dephosphorylation and proteasomal degradation. It may also prevent thiol-dependent inactivation. CAMP-dependent phosphorylation on both N-terminal Thr-31 and C-terminal Ser-205 regulates AANAT activity by promoting interaction with 14-3-3 proteins. Highly expressed in pineal gland and at lower levels in the retina. Weak expression in several brain regions and in the pituitary gland.

Its subcellular location is the cytoplasm. It carries out the reaction a 2-arylethylamine + acetyl-CoA = an N-acetyl-2-arylethylamine + CoA + H(+). Its pathway is aromatic compound metabolism; melatonin biosynthesis; melatonin from serotonin: step 1/2. In terms of biological role, controls the night/day rhythm of melatonin production in the pineal gland. Catalyzes the N-acetylation of serotonin into N-acetylserotonin, the penultimate step in the synthesis of melatonin. The polypeptide is Serotonin N-acetyltransferase (AANAT) (Homo sapiens (Human)).